The following is a 292-amino-acid chain: ATP synthase gamma chain (292 aa).

The protein belongs to the ATPase gamma chain family. F-type ATPases have 2 components, CF(1) - the catalytic core - and CF(0) - the membrane proton channel. CF(1) has five subunits: alpha(3), beta(3), gamma(1), delta(1), epsilon(1). CF(0) has three main subunits: a, b and c.

It localises to the cell membrane. Its function is as follows. Produces ATP from ADP in the presence of a proton gradient across the membrane. The gamma chain is believed to be important in regulating ATPase activity and the flow of protons through the CF(0) complex. This Caldicellulosiruptor saccharolyticus (strain ATCC 43494 / DSM 8903 / Tp8T 6331) protein is ATP synthase gamma chain.